The sequence spans 369 residues: MSQWGPRAILVQTDSTNRNADGDWQAAVAIRGGGVVQLNMVNKRAVDFTPAECGDSEWAVGRVSLGLRMAMPRDFCAIIHAPAVSGPGPHVMLGLVDSGYRGTVLAVVVAPNGTRGFAPGALRVDVTFLDIRATPPTLTEPSSLHRFPQLAPSPLAGLREDPWLDGALATAGGAVALPARRRGGSLVYAGELTQVTTEHGDCVHEAPAFLPKREEDAGFDILIHRAVTVPANGATVIQPSLRVLRAADGPEACYVLGRSSLNARGLLVMPTRWPSGHACAFVVCNLTGVPVTLQAGSKVAQLLVAGTHALPWIPPDNIHEDGAFRAYPRGVPDATATPRDPPILVFTNEFDADAPPSKRGAGGFGSTGI.

Substrate is bound by residues 258–260 (RSS) and 364–365 (FG).

It belongs to the dUTPase family. Mg(2+) serves as cofactor.

The catalysed reaction is dUTP + H2O = dUMP + diphosphate + H(+). Functionally, involved in nucleotide metabolism: produces dUMP, the immediate precursor of thymidine nucleotides and decreases the intracellular concentration of dUTP to avoid uracil incorporation into viral DNA. The polypeptide is Deoxyuridine 5'-triphosphate nucleotidohydrolase (Homo sapiens (Human)).